Here is a 637-residue protein sequence, read N- to C-terminus: Chaperone protein DnaK (637 aa).

Thr196 is subject to Phosphothreonine; by autocatalysis. Residues 598–637 (AEAPGADAPEGQAPQDGGSKKGGEGAVENAEYEVIDGDGK) form a disordered region. Residues 627-637 (AEYEVIDGDGK) show a composition bias toward acidic residues.

This sequence belongs to the heat shock protein 70 family.

In terms of biological role, acts as a chaperone. In Chlorobium luteolum (strain DSM 273 / BCRC 81028 / 2530) (Pelodictyon luteolum), this protein is Chaperone protein DnaK.